Here is a 202-residue protein sequence, read N- to C-terminus: ATP-dependent Clp protease proteolytic subunit (202 aa).

Serine 106 (nucleophile) is an active-site residue. The active site involves histidine 131.

It belongs to the peptidase S14 family. In terms of assembly, fourteen ClpP subunits assemble into 2 heptameric rings which stack back to back to give a disk-like structure with a central cavity, resembling the structure of eukaryotic proteasomes.

The protein resides in the cytoplasm. The enzyme catalyses Hydrolysis of proteins to small peptides in the presence of ATP and magnesium. alpha-casein is the usual test substrate. In the absence of ATP, only oligopeptides shorter than five residues are hydrolyzed (such as succinyl-Leu-Tyr-|-NHMec, and Leu-Tyr-Leu-|-Tyr-Trp, in which cleavage of the -Tyr-|-Leu- and -Tyr-|-Trp bonds also occurs).. In terms of biological role, cleaves peptides in various proteins in a process that requires ATP hydrolysis. Has a chymotrypsin-like activity. Plays a major role in the degradation of misfolded proteins. The sequence is that of ATP-dependent Clp protease proteolytic subunit from Shewanella baltica (strain OS223).